Reading from the N-terminus, the 617-residue chain is Autophagy-related protein 20 (617 aa).

Residues 1–83 form a disordered region; the sequence is MWNDEDNNPY…KRKPGGYDSR (83 aa). A compositionally biased stretch (low complexity) spans 20 to 31; the sequence is QSSSINPTSPST. Basic and acidic residues predominate over residues 48 to 58; that stretch reads DNEHNHGVIHD. Residues 59-68 are compositionally biased toward acidic residues; that stretch reads DSDDDDEDLT. The PX domain maps to 89–209; the sequence is YENPKLSILI…RFFDPNASWS (121 aa). Residues arginine 126, serine 128, lysine 152, and arginine 175 each contribute to the a 1,2-diacyl-sn-glycero-3-phospho-(1D-myo-inositol-3-phosphate) site. Residues 403 to 440 adopt a coiled-coil conformation; sequence QQDLTTEELSKKRALLDQLEQSEAEARRIENYLSSSQQ. The tract at residues 434–516 is disordered; sequence YLSSSQQISP…SGNSITNKIF (83 aa). Positions 454–463 are enriched in basic and acidic residues; it reads PPSHQRRDGS. Positions 480–500 are enriched in polar residues; the sequence is DFSSHTPSASQGLPERSTSVP.

The protein belongs to the sorting nexin family. Forms a complex with SNX4/ATG24 and ATG17.

The protein localises to the endosome membrane. It is found in the preautophagosomal structure membrane. Functionally, required for cytoplasm to vacuole transport (Cvt), pexophagy and mitophagy. Also involved in endoplasmic reticulum-specific autophagic process and is essential for the survival of cells subjected to severe ER stress. Functions in protein retrieval from the endocytic pathway. Required for proper sorting of the v-SNARE protein SNC1. Autophagy is required for proper vegetative growth, asexual/sexual reproduction, and full virulence. Autophagy is particularly involved in the biosynthesis of deoxynivalenol (DON), an important virulence determinant. This is Autophagy-related protein 20 from Gibberella zeae (strain ATCC MYA-4620 / CBS 123657 / FGSC 9075 / NRRL 31084 / PH-1) (Wheat head blight fungus).